Reading from the N-terminus, the 352-residue chain is NADH-ubiquinone oxidoreductase chain 2 (352 aa).

The next 11 helical transmembrane spans lie at 4–24, 26–46, 60–80, 96–116, 124–144, 150–170, 178–198, 205–225, 241–261, 274–294, and 330–350; these read MISI…VSAE, WFVI…ILWF, FLVQ…QAWF, LCLS…FWLP, FIQG…LLFY, FSYF…WGGL, ILAF…AFSL, LFIY…LSIF, ITLV…TGFI, GFIF…FFYL, and LVSS…PLYI.

It belongs to the complex I subunit 2 family.

It is found in the mitochondrion inner membrane. The enzyme catalyses a ubiquinone + NADH + 5 H(+)(in) = a ubiquinol + NAD(+) + 4 H(+)(out). Its function is as follows. Core subunit of the mitochondrial membrane respiratory chain NADH dehydrogenase (Complex I) that is believed to belong to the minimal assembly required for catalysis. Complex I functions in the transfer of electrons from NADH to the respiratory chain. The immediate electron acceptor for the enzyme is believed to be ubiquinone. The polypeptide is NADH-ubiquinone oxidoreductase chain 2 (ND2) (Paracentrotus lividus (Common sea urchin)).